The sequence spans 292 residues: MSFDPTGYTLAHEHLHIDLSGFKNNVDCRLDQYAFICQEMNDLMTRGVRNVIEMTNRYMGRNAQFMLDVMRETGINVVACTGYYQDAFFPEHVATRSVQELAQEMVDEIEQGIDGTELKAGIIAEIGTSEGKITPLEEKVFIAAALAHNQTGRPISTHTSFSTMGLEQLALLQAHGVDLSRVTVGHCDLKDNLDNILKMIDLGAYVQFDTIGKNSYYPDEKRIAMLHALRDRGLLNRVMLSMDITRRSHLKANGGYGYDYLLTTFIPQLRQSGFSQADVDVMLRENPSQFFQ.

His-12, His-14, and Glu-125 together coordinate Zn(2+). Beta-D-glucose is bound at residue 148–149 (HN). His-158 lines the Zn(2+) pocket. Gly-176, Asp-178, and Arg-181 together coordinate beta-D-glucose. His-186 and Asp-243 together coordinate Zn(2+). 2 residues coordinate beta-D-glucose: Asp-280 and Arg-284.

This sequence belongs to the metallo-dependent hydrolases superfamily. Phosphotriesterase family. In terms of assembly, monomer. It depends on Zn(2+) as a cofactor.

Its activity is regulated as follows. Activity is higher in the enzyme containing Mn(2+) than that containing Zn(2+). Its function is as follows. Catalyzes the hydrolysis of phosphorylated glyceryl acetates in which the presence of a phosphate group is required for the enzymatic hydrolysis. Hydrolyzes a dibutyl glycerol derivative suggesting it acts on phosphoglycerol substrates with a butyrate leaving group. Also active with aromatic acetates and propionates. No activity with various sugar phosphates, with various nitrophenylphosphate or nitrophenylphosphonate derivatives, or with phosphorylated or non-phosphorylated sugar lactones tested. Does not hydrolyze non-phosphorylated carboxyesters with long chain leaving groups. No general esterase, aminopeptidase, sulfatase, phosphatase, carbonic anhydrase, phosphodiesterase, and phosphotriesterase activities detected when tested with the following non-specific substrates: p-nitrophenyl acetate, L-alanine nitroanilide, p-nitrophenyl sulfate, bis(p-nitrophenyl) phosphate, paraoxon, and p-nitrophenyl phosphate. This chain is Phosphotriesterase homology protein, found in Escherichia coli (strain K12).